The primary structure comprises 181 residues: Disulfide bond formation protein B (181 aa).

The Cytoplasmic portion of the chain corresponds to 1–13; sequence MLSVGQWPNKPFA. The chain crosses the membrane as a helical span at residues 14-30; that stretch reads WLLLFLGCSGLLGAALY. Over 31–48 the chain is Periplasmic; that stretch reads FQMVLNLEPCVKCVYQRM. Residues cysteine 40 and cysteine 43 are joined by a disulfide bond. The chain crosses the membrane as a helical span at residues 49 to 64; the sequence is AVIGIGLSAIVGLFGS. Residues 65 to 71 are Cytoplasmic-facing; sequence GLWLTRW. Residues 72 to 89 form a helical membrane-spanning segment; the sequence is AALIGWLYSSYQGLLIAY. Topologically, residues 90–145 are periplasmic; that stretch reads DHWDLQTSKNAFFAVCESAPNFPDWAPMHEWMPGLFAAPGLCGDIDWQWLGLGMPG. A disulfide bridge connects residues cysteine 105 and cysteine 131. Residues 146–164 form a helical membrane-spanning segment; that stretch reads WMTVIFAGLLLIGIIVTIC. The Cytoplasmic portion of the chain corresponds to 165–181; it reads HIISSFTKKDGLVLYHK.

This sequence belongs to the DsbB family.

It localises to the cell inner membrane. In terms of biological role, required for disulfide bond formation in some periplasmic proteins. Acts by oxidizing the DsbA protein. This Idiomarina loihiensis (strain ATCC BAA-735 / DSM 15497 / L2-TR) protein is Disulfide bond formation protein B.